Consider the following 475-residue polypeptide: Ribulose bisphosphate carboxylase large chain (475 aa).

Positions 1–2 (MS) are excised as a propeptide. Pro3 carries the post-translational modification N-acetylproline. N6,N6,N6-trimethyllysine is present on Lys14. Substrate is bound by residues Asn123 and Thr173. Lys175 acts as the Proton acceptor in catalysis. Lys177 provides a ligand contact to substrate. Lys201, Asp203, and Glu204 together coordinate Mg(2+). Lys201 is subject to N6-carboxylysine. His294 acts as the Proton acceptor in catalysis. Residues Arg295, His327, and Ser379 each contribute to the substrate site.

The protein belongs to the RuBisCO large chain family. Type I subfamily. Heterohexadecamer of 8 large chains and 8 small chains; disulfide-linked. The disulfide link is formed within the large subunit homodimers. Mg(2+) serves as cofactor. Post-translationally, the disulfide bond which can form in the large chain dimeric partners within the hexadecamer appears to be associated with oxidative stress and protein turnover.

It localises to the plastid. The protein resides in the chloroplast. The enzyme catalyses 2 (2R)-3-phosphoglycerate + 2 H(+) = D-ribulose 1,5-bisphosphate + CO2 + H2O. It carries out the reaction D-ribulose 1,5-bisphosphate + O2 = 2-phosphoglycolate + (2R)-3-phosphoglycerate + 2 H(+). RuBisCO catalyzes two reactions: the carboxylation of D-ribulose 1,5-bisphosphate, the primary event in carbon dioxide fixation, as well as the oxidative fragmentation of the pentose substrate in the photorespiration process. Both reactions occur simultaneously and in competition at the same active site. This Adiantum capillus-veneris (Maidenhair fern) protein is Ribulose bisphosphate carboxylase large chain.